Reading from the N-terminus, the 274-residue chain is tRNA-cytidine(32) 2-sulfurtransferase (274 aa).

Residues 40-45 (SGGKDS) carry the PP-loop motif motif. Residues Cys115, Cys118, and Cys206 each coordinate [4Fe-4S] cluster.

The protein belongs to the TtcA family. As to quaternary structure, homodimer. Requires Mg(2+) as cofactor. [4Fe-4S] cluster is required as a cofactor.

Its subcellular location is the cytoplasm. The catalysed reaction is cytidine(32) in tRNA + S-sulfanyl-L-cysteinyl-[cysteine desulfurase] + AH2 + ATP = 2-thiocytidine(32) in tRNA + L-cysteinyl-[cysteine desulfurase] + A + AMP + diphosphate + H(+). It functions in the pathway tRNA modification. Catalyzes the ATP-dependent 2-thiolation of cytidine in position 32 of tRNA, to form 2-thiocytidine (s(2)C32). The sulfur atoms are provided by the cysteine/cysteine desulfurase (IscS) system. The polypeptide is tRNA-cytidine(32) 2-sulfurtransferase (Pseudomonas putida (strain ATCC 700007 / DSM 6899 / JCM 31910 / BCRC 17059 / LMG 24140 / F1)).